A 977-amino-acid chain; its full sequence is RNA-binding protein 15 (977 aa).

Composition is skewed to basic and acidic residues over residues 1 to 10 (MRTAGRDPVP), 35 to 52 (RGDD…ERSP), 59 to 72 (RGGE…ERSK), and 98 to 113 (LHLD…REYD). Positions 1–167 (MRTAGRDPVP…SSAPGGGDGA (167 aa)) are disordered. Position 109 is a phosphoserine (Ser109). Residues 119–130 (SSSRLHSYSSPS) are compositionally biased toward low complexity. Over residues 135–150 (SGGGESRSSSRGGGGE) the composition is skewed to gly residues. Low complexity predominate over residues 151 to 160 (SRSSGAASSA). The region spanning 170–252 (KTLKISELGS…RPLKIEAVYV (83 aa)) is the RRM 1 domain. Phosphoserine is present on residues Ser179, Ser208, and Ser210. Lys246 participates in a covalent cross-link: Glycyl lysine isopeptide (Lys-Gly) (interchain with G-Cter in SUMO2). Residues Ser253, Ser257, and Ser259 each carry the phosphoserine modification. A disordered region spans residues 256–298 (RSRSPLDKDTYPPSASVVGASVGGHRHPPGGGGGQRSLSPGGA). A Phosphotyrosine modification is found at Tyr266. Ser292, Ser294, and Ser365 each carry phosphoserine. 2 RRM domains span residues 374–451 (RTLF…YGKA) and 455–529 (TRLW…FADT). Residues Lys406, Lys420, and Lys445 each participate in a glycyl lysine isopeptide (Lys-Gly) (interchain with G-Cter in SUMO2) cross-link. Lys450 is subject to N6-acetyllysine. Basic and acidic residues-rich tracts occupy residues 555–581 (HRAP…RDLY) and 613–661 (SLDR…ESDR). Positions 555–778 (HRAPDPLRGA…KQDGGTAPVA (224 aa)) are disordered. Thr568 bears the Phosphothreonine mark. Residue Arg578 is modified to Asymmetric dimethylarginine; alternate; by PRMT1. An Omega-N-methylarginine; alternate; by PRMT1 modification is found at Arg578. Residues Ser622, Ser656, Ser670, Ser674, Ser700, and Ser741 each carry the phosphoserine modification. Composition is skewed to basic and acidic residues over residues 673–728 (RSPE…AERD) and 741–750 (SPLKKEDRSD). Lys744 is covalently cross-linked (Glycyl lysine isopeptide (Lys-Gly) (interchain with G-Cter in SUMO2)). Positions 752-771 (SAPSTSTASSKLKSPSQKQD) are enriched in polar residues. Phosphoserine occurs at positions 765, 767, and 781. The 180-residue stretch at 777–956 (VASASPKLCL…YLVMIIVRGF (180 aa)) folds into the SPOC domain. A disordered region spans residues 865–884 (GSSDSRSSSSSAASDTATST). The segment covering 866-884 (SSDSRSSSSSAASDTATST) has biased composition (low complexity). Ser935 is subject to Phosphoserine.

This sequence belongs to the RRM Spen family. As to quaternary structure, component of the WMM complex, a N6-methyltransferase complex composed of a catalytic subcomplex, named MAC, and of an associated subcomplex, named MACOM. The MAC subcomplex is composed of METTL3 and METTL14. The MACOM subcomplex is composed of WTAP, ZC3H13, CBLL1/HAKAI, VIRMA, and, in some cases of RBM15 (RBM15 or RBM15B). Also a component of a MACOM-like complex, named WTAP complex, composed of WTAP, ZC3H13, CBLL1, VIRMA, RBM15, BCLAF1 and THRAP3. Interacts with RBPJ. Interacts (via SPOC domain) with SETD1B. Interacts with NXF1, the interaction is required to promote mRNA export. Interacts with SF3B1. (Microbial infection) Interacts with Epstein-Barr virus BSFL2/BMLF1. Methylated at Arg-578 by PRMT1, leading to promote ubiquitination by CNOT4 and subsequent degradation by the proteasome. Post-translationally, ubiquitinated by CNOT4 following methylation at Arg-578 by PRMT1.

It localises to the nucleus speckle. The protein resides in the nucleus. It is found in the nucleoplasm. Its subcellular location is the nucleus envelope. The protein localises to the nucleus membrane. Functionally, RNA-binding protein that acts as a key regulator of N6-methyladenosine (m6A) methylation of RNAs, thereby regulating different processes, such as hematopoietic cell homeostasis, alternative splicing of mRNAs and X chromosome inactivation mediated by Xist RNA. Associated component of the WMM complex, a complex that mediates N6-methyladenosine (m6A) methylation of RNAs, a modification that plays a role in the efficiency of mRNA splicing and RNA processing. Plays a key role in m6A methylation, possibly by binding target RNAs and recruiting the WMM complex. Involved in random X inactivation mediated by Xist RNA: acts by binding Xist RNA and recruiting the WMM complex, which mediates m6A methylation, leading to target YTHDC1 reader on Xist RNA and promoting transcription repression activity of Xist. Required for the development of multiple tissues, such as the maintenance of the homeostasis of long-term hematopoietic stem cells and for megakaryocyte (MK) and B-cell differentiation. Regulates megakaryocyte differentiation by regulating alternative splicing of genes important for megakaryocyte differentiation; probably regulates alternative splicing via m6A regulation. Required for placental vascular branching morphogenesis and embryonic development of the heart and spleen. Acts as a regulator of thrombopoietin response in hematopoietic stem cells by regulating alternative splicing of MPL. May also function as an mRNA export factor, stimulating export and expression of RTE-containing mRNAs which are present in many retrotransposons that require to be exported prior to splicing. High affinity binding of pre-mRNA to RBM15 may allow targeting of the mRNP to the export helicase DBP5 in a manner that is independent of splicing-mediated NXF1 deposition, resulting in export prior to splicing. May be implicated in HOX gene regulation. In Homo sapiens (Human), this protein is RNA-binding protein 15.